Consider the following 248-residue polypeptide: Probable transcriptional regulatory protein Ccel_0181 (248 aa).

The protein belongs to the TACO1 family.

The protein resides in the cytoplasm. This is Probable transcriptional regulatory protein Ccel_0181 from Ruminiclostridium cellulolyticum (strain ATCC 35319 / DSM 5812 / JCM 6584 / H10) (Clostridium cellulolyticum).